We begin with the raw amino-acid sequence, 476 residues long: MSPQTETKASVGFKAGVKDYKLTYYTPDYETLDTDILAAFRVTPQPGVPAEEAGAAVAAESSTGTWTTVWTDGLTSLDRYKGRCYHIEPVAGDENQYICYVAYPLDLFEEGSVTNMFTSIVGNVFGFKALRALRLEDLRIPVAYIKTFLGPPHGIQVERDKLNKYGRPLLGCTIKPKLGLSAKNYGRAVYECLRGGLDFTKDDENVNSQPFMRWRDRFLFCAEAINKAQAETGEIKGHYLNATAGTCEEMIKRAVFARELGVPIVMHDYITGGFTANTSLAHYCRDNGLLLHIHRAMHAVIDRQKNHGMHFRVLAKALRLSGGDHIHSGTVVGKLEGERDITLGFVDLLRDDFTEKDRSRGIYFTQSWVSTPGVLPVASGGIHVWHMPALTEIFGDDSVLQFGGGTLGHPWGNAPGAVANRVALEACVQARNEGRDLAREGNTIIREACKWSPELAAACEVWKEIKFEFQAMDTID.

Positions 1 to 2 (MS) are excised as a propeptide. P3 bears the N-acetylproline mark. Residue K14 is modified to N6,N6,N6-trimethyllysine. Positions 123 and 173 each coordinate substrate. The active-site Proton acceptor is K175. K177 is a binding site for substrate. Residues K201, D203, and E204 each coordinate Mg(2+). Position 201 is an N6-carboxylysine (K201). The Proton acceptor role is filled by H294. The substrate site is built by R295, H327, and S379.

This sequence belongs to the RuBisCO large chain family. Type I subfamily. As to quaternary structure, heterohexadecamer of 8 large chains and 8 small chains; disulfide-linked. The disulfide link is formed within the large subunit homodimers. Mg(2+) serves as cofactor. The disulfide bond which can form in the large chain dimeric partners within the hexadecamer appears to be associated with oxidative stress and protein turnover.

The protein resides in the plastid. It localises to the chloroplast. The catalysed reaction is 2 (2R)-3-phosphoglycerate + 2 H(+) = D-ribulose 1,5-bisphosphate + CO2 + H2O. It carries out the reaction D-ribulose 1,5-bisphosphate + O2 = 2-phosphoglycolate + (2R)-3-phosphoglycerate + 2 H(+). RuBisCO catalyzes two reactions: the carboxylation of D-ribulose 1,5-bisphosphate, the primary event in carbon dioxide fixation, as well as the oxidative fragmentation of the pentose substrate in the photorespiration process. Both reactions occur simultaneously and in competition at the same active site. The polypeptide is Ribulose bisphosphate carboxylase large chain (Arenaria drummondii (Drummond sandwort)).